The sequence spans 150 residues: 6,7-dimethyl-8-ribityllumazine synthase (150 aa).

Residues F11, 43–45, and 67–69 each bind 5-amino-6-(D-ribitylamino)uracil; these read VYD and AVI. 72-73 contributes to the (2S)-2-hydroxy-3-oxobutyl phosphate binding site; sequence AT. The active-site Proton donor is the H75. L100 is a binding site for 5-amino-6-(D-ribitylamino)uracil. R115 provides a ligand contact to (2S)-2-hydroxy-3-oxobutyl phosphate.

This sequence belongs to the DMRL synthase family.

It carries out the reaction (2S)-2-hydroxy-3-oxobutyl phosphate + 5-amino-6-(D-ribitylamino)uracil = 6,7-dimethyl-8-(1-D-ribityl)lumazine + phosphate + 2 H2O + H(+). The protein operates within cofactor biosynthesis; riboflavin biosynthesis; riboflavin from 2-hydroxy-3-oxobutyl phosphate and 5-amino-6-(D-ribitylamino)uracil: step 1/2. Functionally, catalyzes the formation of 6,7-dimethyl-8-ribityllumazine by condensation of 5-amino-6-(D-ribitylamino)uracil with 3,4-dihydroxy-2-butanone 4-phosphate. This is the penultimate step in the biosynthesis of riboflavin. This chain is 6,7-dimethyl-8-ribityllumazine synthase, found in Pyrobaculum aerophilum (strain ATCC 51768 / DSM 7523 / JCM 9630 / CIP 104966 / NBRC 100827 / IM2).